Here is a 448-residue protein sequence, read N- to C-terminus: Probable glycine dehydrogenase (decarboxylating) subunit 1 (448 aa).

This sequence belongs to the GcvP family. N-terminal subunit subfamily. The glycine cleavage system is composed of four proteins: P, T, L and H. In this organism, the P 'protein' is a heterodimer of two subunits.

It carries out the reaction N(6)-[(R)-lipoyl]-L-lysyl-[glycine-cleavage complex H protein] + glycine + H(+) = N(6)-[(R)-S(8)-aminomethyldihydrolipoyl]-L-lysyl-[glycine-cleavage complex H protein] + CO2. The glycine cleavage system catalyzes the degradation of glycine. The P protein binds the alpha-amino group of glycine through its pyridoxal phosphate cofactor; CO(2) is released and the remaining methylamine moiety is then transferred to the lipoamide cofactor of the H protein. This chain is Probable glycine dehydrogenase (decarboxylating) subunit 1, found in Pyrococcus furiosus (strain ATCC 43587 / DSM 3638 / JCM 8422 / Vc1).